We begin with the raw amino-acid sequence, 367 residues long: Developmentally-regulated GTP-binding protein 1 (367 aa).

A required for interaction with STK16 region spans residues 2-16 (SGTLARIAEIEAEMA). Residues 65 to 290 (ARIGFVGFPS…LLEKIWDYLQ (226 aa)) enclose the OBG-type G domain. Residues 71-78 (GFPSVGKS), 96-100 (FTTLT), 117-120 (DLPG), 248-251 (NKID), and 271-273 (SAH) each bind GTP. Mg(2+) is bound by residues serine 78 and threonine 98. One can recognise a TGS domain in the interval 290-366 (QLVRIYTKPK…EDEDVIQIVK (77 aa)).

This sequence belongs to the TRAFAC class OBG-HflX-like GTPase superfamily. OBG GTPase family. Requires Mg(2+) as cofactor. The cofactor is K(+). In terms of tissue distribution, expressed in many adult amd embryonic tissues. In adults, highest levels in ovaries and testes, followed by skeletal muscle, stomach, brain, kidney and liver. Weak expression in heart and brain.

Its subcellular location is the nucleus. The protein resides in the cytoplasm. It carries out the reaction GTP + H2O = GDP + phosphate + H(+). Its function is as follows. Catalyzes the conversion of GTP to GDP through hydrolysis of the gamma-phosphate bond in GTP. Binds to microtubules and promotes microtubule polymerization and bundling. GTPase activity is not necessary for these microtubule-related functions. In Xenopus laevis (African clawed frog), this protein is Developmentally-regulated GTP-binding protein 1 (drg1).